The sequence spans 403 residues: Leu/Ile/Val-binding protein homolog 8 (403 aa).

The first 26 residues, Met1–Ala26, serve as a signal peptide directing secretion.

It belongs to the leucine-binding protein family.

Component of an amino-acid transport system. The chain is Leu/Ile/Val-binding protein homolog 8 from Brucella suis biovar 1 (strain 1330).